The following is a 56-amino-acid chain: Large ribosomal subunit protein bL33 (56 aa).

This sequence belongs to the bacterial ribosomal protein bL33 family.

The chain is Large ribosomal subunit protein bL33 from Helicobacter hepaticus (strain ATCC 51449 / 3B1).